The chain runs to 256 residues: Ubiquinone biosynthesis O-methyltransferase (256 aa).

4 residues coordinate S-adenosyl-L-methionine: Arg44, Gly80, Asp101, and Met144.

It belongs to the methyltransferase superfamily. UbiG/COQ3 family.

The enzyme catalyses a 3-demethylubiquinol + S-adenosyl-L-methionine = a ubiquinol + S-adenosyl-L-homocysteine + H(+). It carries out the reaction a 3-(all-trans-polyprenyl)benzene-1,2-diol + S-adenosyl-L-methionine = a 2-methoxy-6-(all-trans-polyprenyl)phenol + S-adenosyl-L-homocysteine + H(+). The protein operates within cofactor biosynthesis; ubiquinone biosynthesis. Functionally, O-methyltransferase that catalyzes the 2 O-methylation steps in the ubiquinone biosynthetic pathway. This chain is Ubiquinone biosynthesis O-methyltransferase, found in Methylocella silvestris (strain DSM 15510 / CIP 108128 / LMG 27833 / NCIMB 13906 / BL2).